We begin with the raw amino-acid sequence, 657 residues long: Threonine--tRNA ligase (657 aa).

The 64-residue stretch at 7–70 (ILAVIALTLP…TADAAIEIIT (64 aa)) folds into the TGS domain. The catalytic stretch occupies residues 253–555 (DHRKLGAELE…LIEHTAGNFP (303 aa)). Residues Cys351, His402, and His532 each contribute to the Zn(2+) site.

It belongs to the class-II aminoacyl-tRNA synthetase family. Homodimer. Zn(2+) is required as a cofactor.

The protein resides in the cytoplasm. The enzyme catalyses tRNA(Thr) + L-threonine + ATP = L-threonyl-tRNA(Thr) + AMP + diphosphate + H(+). Catalyzes the attachment of threonine to tRNA(Thr) in a two-step reaction: L-threonine is first activated by ATP to form Thr-AMP and then transferred to the acceptor end of tRNA(Thr). Also edits incorrectly charged L-seryl-tRNA(Thr). This Pelodictyon phaeoclathratiforme (strain DSM 5477 / BU-1) protein is Threonine--tRNA ligase.